The chain runs to 520 residues: MSTTAYPDTILIIDFGSQVTQLIARRVREANVYCEIVPFQSADEAFKRLQPKGVILSGSPHSTTDIGSPRAPQAIFDAGIPVLGICYGEQTMCAQLGGNVESGHDREFGRAFLDVQEDSPLFAGIWAKGTRHQVWMSHGDRVTSLPDGFTIIGTSPNAPYAVIADEKRKYYGVQFHPEVVHTPDGAKLLQNFVHRIVGVKPGWTMGAYREQAVEAIRKQVGSGKVICALSGGVDSSVAALLAHEAVGDQLTCILVDHGLMRKDEVQQVVEMFREHYNLPLILVDASDRFIGALEGESDPEKKRKTIGRLFIEVFEEEARKLGGADFLVQGTLYPDVIESVSFTGGPSVTIKSHHNVGGLPERMKMQLVEPLRELFKDEVRLLGKELGLPDSFIGRHPFPGPGLAIRCPGGVTREKLEILREADAIYLDEIRKAGLYDAIWQAFAVLLPVQTVGVMGDGRTYEFVCALRAVTSVDGMTADFYHYDMNFLGNAATRIINEVRGINRVVYDVTSKPPGTIEWE.

In terms of domain architecture, Glutamine amidotransferase type-1 spans 9-202; the sequence is TILIIDFGSQ…VHRIVGVKPG (194 aa). C86 serves as the catalytic Nucleophile. Active-site residues include H176 and E178. In terms of domain architecture, GMPS ATP-PPase spans 203–395; that stretch reads WTMGAYREQA…LGLPDSFIGR (193 aa). Position 230-236 (230-236) interacts with ATP; sequence SGGVDSS.

Homodimer.

It catalyses the reaction XMP + L-glutamine + ATP + H2O = GMP + L-glutamate + AMP + diphosphate + 2 H(+). It participates in purine metabolism; GMP biosynthesis; GMP from XMP (L-Gln route): step 1/1. Catalyzes the synthesis of GMP from XMP. This is GMP synthase [glutamine-hydrolyzing] from Brucella melitensis biotype 2 (strain ATCC 23457).